A 68-amino-acid polypeptide reads, in one-letter code: Large ribosomal subunit protein bL31 (68 aa).

Residues cysteine 16, cysteine 18, cysteine 37, and cysteine 40 each contribute to the Zn(2+) site.

It belongs to the bacterial ribosomal protein bL31 family. Type A subfamily. As to quaternary structure, part of the 50S ribosomal subunit. The cofactor is Zn(2+).

Binds the 23S rRNA. The protein is Large ribosomal subunit protein bL31 of Aquifex aeolicus (strain VF5).